We begin with the raw amino-acid sequence, 424 residues long: Arginine biosynthesis bifunctional protein ArgJ (424 aa).

Substrate-binding residues include threonine 172, lysine 198, threonine 209, glutamate 296, asparagine 419, and serine 424. The Nucleophile role is filled by threonine 209.

The protein belongs to the ArgJ family. Heterotetramer of two alpha and two beta chains.

It localises to the cytoplasm. It carries out the reaction N(2)-acetyl-L-ornithine + L-glutamate = N-acetyl-L-glutamate + L-ornithine. The enzyme catalyses L-glutamate + acetyl-CoA = N-acetyl-L-glutamate + CoA + H(+). The protein operates within amino-acid biosynthesis; L-arginine biosynthesis; L-ornithine and N-acetyl-L-glutamate from L-glutamate and N(2)-acetyl-L-ornithine (cyclic): step 1/1. It functions in the pathway amino-acid biosynthesis; L-arginine biosynthesis; N(2)-acetyl-L-ornithine from L-glutamate: step 1/4. Functionally, catalyzes two activities which are involved in the cyclic version of arginine biosynthesis: the synthesis of N-acetylglutamate from glutamate and acetyl-CoA as the acetyl donor, and of ornithine by transacetylation between N(2)-acetylornithine and glutamate. This chain is Arginine biosynthesis bifunctional protein ArgJ, found in Gluconobacter oxydans (strain 621H) (Gluconobacter suboxydans).